The chain runs to 506 residues: UBX domain-containing protein 4 (506 aa).

Positions 1–199 (MLWFQGAIPA…PAEDLTVRVE (199 aa)) are interaction with UBQLN1. Over 1-411 (MLWFQGAIPA…VHSSSGDIWT (411 aa)) the chain is Cytoplasmic. The segment at 110-194 (QQMHSSKGEA…CSNQRPAEDL (85 aa)) is disordered. 2 stretches are compositionally biased toward polar residues: residues 120-136 (SVTN…TPSA) and 153-167 (LCET…SDTA). Residues 313 to 391 (DRSTIARIQF…ELAPSASVVL (79 aa)) enclose the UBX domain. The stretch at 412–432 (LLGTVLYPFLAIWRLISNFLF) is an intramembrane region. Residues 433–506 (SNPPPAQTSA…TWNGNSTQQM (74 aa)) lie on the Cytoplasmic side of the membrane. The tract at residues 437-506 (PAQTSARATS…TWNGNSTQQM (70 aa)) is disordered. Positions 444–456 (ATSTEPSNSASSS) are enriched in low complexity. Over residues 457–489 (KSEKREPVRKRMLEKRGEDFKKEGKIYRLRTQD) the composition is skewed to basic and acidic residues. Residue Thr-487 is modified to Phosphothreonine. Polar residues predominate over residues 496 to 506 (NTWNGNSTQQM).

In terms of assembly, directly interacts with VCP. Interacts with UBQLN1. Forms a complex with VCP and UBQLN1. As to expression, expressed in many tissues, including brain, heart, kidney, liver, muscle and spleen (at protein level).

It is found in the endoplasmic reticulum membrane. The protein resides in the nucleus envelope. Its function is as follows. Involved in endoplasmic reticulum-associated protein degradation (ERAD). Acts as a platform to recruit both UBQLN1 and VCP to the ER during ERAD. The chain is UBX domain-containing protein 4 (Ubxn4) from Mus musculus (Mouse).